A 204-amino-acid polypeptide reads, in one-letter code: Thymidylate kinase (204 aa).

11–18 (GLDKSGKT) contributes to the ATP binding site.

It belongs to the thymidylate kinase family.

It carries out the reaction dTMP + ATP = dTDP + ADP. It participates in pyrimidine metabolism; dTTP biosynthesis. This is Thymidylate kinase (TMK) from Camelus.